The chain runs to 141 residues: MTSVKERVAAPSVNFEKILFFPEGIPGFEDFKEYRIFHKETNGLAIYWLESCDDAAVTFTLVAPDHYGLHYDFNLSDEEQTLLQAEEPMQLAIFLIVSKGEGQYAGLNANISGPIVINVQRQRALQKVLQQSRVLTTIIDQ.

Belongs to the FliW family. In terms of assembly, interacts with translational regulator CsrA and flagellin(s).

It localises to the cytoplasm. In terms of biological role, acts as an anti-CsrA protein, binds CsrA and prevents it from repressing translation of its target genes, one of which is flagellin. Binds to flagellin and participates in the assembly of the flagellum. The sequence is that of Flagellar assembly factor FliW 1 from Desulfotalea psychrophila (strain LSv54 / DSM 12343).